The following is a 416-amino-acid chain: Casein kinase I isoform epsilon (416 aa).

One can recognise a Protein kinase domain in the interval Y9 to F277. ATP contacts are provided by residues I15–I23 and K38. Residue D128 is the Proton acceptor of the active site. Residues P301–G318 show a composition bias toward basic and acidic residues. The tract at residues P301–K416 is disordered. The segment covering A324–G338 has biased composition (low complexity). Polar residues-rich tracts occupy residues S350–R365 and S400–V409.

The protein belongs to the protein kinase superfamily. CK1 Ser/Thr protein kinase family. Casein kinase I subfamily. Monomer. Component of the circadian core oscillator, which includes the CRY proteins, CLOCK, or NPAS2, BMAL1 or BMAL2, CSNK1E, and the PER proteins.

It localises to the cytoplasm. It catalyses the reaction L-seryl-[protein] + ATP = O-phospho-L-seryl-[protein] + ADP + H(+). The catalysed reaction is L-threonyl-[protein] + ATP = O-phospho-L-threonyl-[protein] + ADP + H(+). Its function is as follows. Casein kinases are operationally defined by their preferential utilization of acidic proteins such as caseins as substrates. Can phosphorylate a large number of proteins. Participates in Wnt signaling. Phosphorylates DVL1. Central component of the circadian clock. May act as a negative regulator of circadian rhythmicity by phosphorylating PER1 and PER2. Retains PER1 in the cytoplasm. In Gallus gallus (Chicken), this protein is Casein kinase I isoform epsilon (CSNK1E).